The sequence spans 106 residues: Urease subunit beta (106 aa).

Belongs to the urease beta subunit family. As to quaternary structure, heterotrimer of UreA (gamma), UreB (beta) and UreC (alpha) subunits. Three heterotrimers associate to form the active enzyme.

It localises to the cytoplasm. The enzyme catalyses urea + 2 H2O + H(+) = hydrogencarbonate + 2 NH4(+). It participates in nitrogen metabolism; urea degradation; CO(2) and NH(3) from urea (urease route): step 1/1. This Synechococcus sp. (strain CC9605) protein is Urease subunit beta.